Consider the following 187-residue polypeptide: UPF0340 protein SPN23F05980 (187 aa).

Belongs to the UPF0340 family.

The sequence is that of UPF0340 protein SPN23F05980 from Streptococcus pneumoniae (strain ATCC 700669 / Spain 23F-1).